The following is a 217-amino-acid chain: Adapter protein MecA (217 aa).

It belongs to the MecA family. In terms of assembly, homodimer.

Functionally, enables the recognition and targeting of unfolded and aggregated proteins to the ClpC protease or to other proteins involved in proteolysis. Acts negatively in the development of competence by binding ComK and recruiting it to the ClpCP protease. When overexpressed, inhibits sporulation. Also involved in Spx degradation by ClpC. The sequence is that of Adapter protein MecA from Alkalihalophilus pseudofirmus (strain ATCC BAA-2126 / JCM 17055 / OF4) (Bacillus pseudofirmus).